The following is a 464-amino-acid chain: RYamide receptor (464 aa).

The Extracellular portion of the chain corresponds to 1–105 (MEHHNSHLLP…EDMWSSAYFK (105 aa)). Residues asparagine 49, asparagine 79, and asparagine 85 are each glycosylated (N-linked (GlcNAc...) asparagine). Residues 106–126 (IIVYMLYIPIFIFALIGNGTV) traverse the membrane as a helical segment. Over 127 to 148 (CYIVYSTPRMRTVTNYFIASLA) the chain is Cytoplasmic. The helical transmembrane segment at 149–169 (IGDILMSFFCVPSSFISLFIL) threads the bilayer. Topologically, residues 170 to 189 (NYWPFGLALCHFVNYSQAVS) are extracellular. Asparagine 183 carries an N-linked (GlcNAc...) asparagine glycan. The helical transmembrane segment at 190 to 210 (VLVSAYTLVAISIDRYIAIMW) threads the bilayer. Topologically, residues 211–221 (PLKPRITKRYA) are cytoplasmic. A helical transmembrane segment spans residues 222–242 (TFIIAGVWFIALATALPIPIV). The Extracellular portion of the chain corresponds to 243–274 (SGLDIPMSPWHTKCEKYICREMWPSRTQEYYY). The helical transmembrane segment at 275–295 (TLSLFALQFVVPLGVLIFTYA) threads the bilayer. The Cytoplasmic portion of the chain corresponds to 296-329 (RITIRVWAKRPPGEAETNRDQRMARSKRKMVKMM). A helical transmembrane segment spans residues 330–350 (LTVVIVFTCCWLPFNILQLLL). Residues 351-363 (NDEEFAHWDPLPY) lie on the Extracellular side of the membrane. A helical transmembrane segment spans residues 364 to 384 (VWFAFHWLAMSHCCYNPIIYC). At 385–464 (YMNARFRSGF…LSCGETSPLR (80 aa)) the chain is on the cytoplasmic side.

The protein belongs to the G-protein coupled receptor 1 family.

It is found in the cell membrane. Its function is as follows. Receptor for the neuropeptides RYamide-1 and RYamide-2. The activity of this receptor is mediated by G proteins which activate a phosphatidyl-inositol-calcium second messenger system. RYamide signaling may suppress feeding behavior. This chain is RYamide receptor, found in Drosophila melanogaster (Fruit fly).